We begin with the raw amino-acid sequence, 312 residues long: Acetaldehyde dehydrogenase 4 (312 aa).

12 to 15 contributes to the NAD(+) binding site; sequence SGNI. Residue cysteine 132 is the Acyl-thioester intermediate of the active site. NAD(+) contacts are provided by residues 163–171 and asparagine 290; that span reads SAGPGTRAN.

It belongs to the acetaldehyde dehydrogenase family.

It catalyses the reaction acetaldehyde + NAD(+) + CoA = acetyl-CoA + NADH + H(+). This Azotobacter vinelandii (strain DJ / ATCC BAA-1303) protein is Acetaldehyde dehydrogenase 4.